Consider the following 435-residue polypeptide: MKTAYVSATIVTLNEQNEVFENGYIIVEDHTIIEVQHGDFFKHDQVDEVVDLKGKWLLPGLVNTHTHIVMSLLRGIGDDMLLQPWLETRIWPLERQFTPELAVASTELGLLEMVKSGTTTFSDMFNPIGIDQDAIMETVRNSGMRAAVSRTLFSFGTKEDEKKAIQEAEKYVKRYYREHDMLTTMVAPHSPYTCSTEMLEECARIAMENNTMVHIHLSETEREVQDIEKQYGKRPVEYIESCGLFKRPTVIAHGVVLNENERTFLAEHDVRVAHNPNSNLKLGSGIANVKAMLEAGIKVGIATDSVASNNNLDMFEEMRIATLLQKGIHQDATALPVETALSLATKGAAEVIGMKQTGSIERGKCADFITIDPAKKPHLQPAEEVLSHLVYAASGKDVSDVVINGKQIMWNGECKTLDEERIIFEARRYKHGLQM.

The Zn(2+) site is built by His65 and His67. Positions 94, 150, and 189 each coordinate substrate. His216 serves as a coordination point for Zn(2+). Substrate-binding residues include Glu219 and Asp304. Asp304 lines the Zn(2+) pocket.

It belongs to the metallo-dependent hydrolases superfamily. MTA/SAH deaminase family. It depends on Zn(2+) as a cofactor.

The enzyme catalyses S-adenosyl-L-homocysteine + H2O + H(+) = S-inosyl-L-homocysteine + NH4(+). It carries out the reaction S-methyl-5'-thioadenosine + H2O + H(+) = S-methyl-5'-thioinosine + NH4(+). Its function is as follows. Catalyzes the deamination of 5-methylthioadenosine and S-adenosyl-L-homocysteine into 5-methylthioinosine and S-inosyl-L-homocysteine, respectively. Is also able to deaminate adenosine. The chain is 5-methylthioadenosine/S-adenosylhomocysteine deaminase from Bacillus cytotoxicus (strain DSM 22905 / CIP 110041 / 391-98 / NVH 391-98).